The primary structure comprises 103 residues: MYAVFQSGGKQHRVSEGQIVRLEKLEAATGDVVEFDQVLMVSDGNDVNIGAPFVSGGKVKAEVIDHGRGDKIKIVKFRRRKHSRRQQGHRQWFTEVKITGINS.

Belongs to the bacterial ribosomal protein bL21 family. In terms of assembly, part of the 50S ribosomal subunit. Contacts protein L20.

This protein binds to 23S rRNA in the presence of protein L20. This is Large ribosomal subunit protein bL21 from Idiomarina loihiensis (strain ATCC BAA-735 / DSM 15497 / L2-TR).